An 88-amino-acid chain; its full sequence is Alpha-latrotoxin associated low molecular weight protein 2 (88 aa).

The first 19 residues, 1 to 19 (MLKLICIAFLVTVLTLVAG), serve as a signal peptide directing secretion. Disulfide bonds link cysteine 30–cysteine 66, cysteine 46–cysteine 62, and cysteine 49–cysteine 75.

Belongs to the arthropod CHH/MIH/GIH/VIH hormone family. Expressed by the venom gland.

It is found in the secreted. May increase the toxicity of alpha-latrotoxin and/or other venom components. Is non-toxic to mice and to the cockroach Periplaneta americana. In Latrodectus hesperus (Western black widow spider), this protein is Alpha-latrotoxin associated low molecular weight protein 2.